The primary structure comprises 308 residues: N-acetylmuramic acid 6-phosphate etherase (308 aa).

An SIS domain is found at 62–225; it reads TAARLRQGGR…STGVMVQLGK (164 aa). The active-site Proton donor is E90. The active site involves E121.

It belongs to the GCKR-like family. MurNAc-6-P etherase subfamily. Homodimer.

It carries out the reaction N-acetyl-D-muramate 6-phosphate + H2O = N-acetyl-D-glucosamine 6-phosphate + (R)-lactate. It functions in the pathway amino-sugar metabolism; N-acetylmuramate degradation. Functionally, specifically catalyzes the cleavage of the D-lactyl ether substituent of MurNAc 6-phosphate, producing GlcNAc 6-phosphate and D-lactate. In Thermosynechococcus vestitus (strain NIES-2133 / IAM M-273 / BP-1), this protein is N-acetylmuramic acid 6-phosphate etherase.